The chain runs to 348 residues: Alcohol dehydrogenase 1 (348 aa).

Residues cysteine 44, histidine 67, cysteine 98, cysteine 101, cysteine 104, cysteine 112, and cysteine 154 each contribute to the Zn(2+) site. Residues 178–184, aspartate 202, lysine 207, 269–271, and arginine 341 each bind NAD(+); these read GAGGGLG and VGL.

Belongs to the zinc-containing alcohol dehydrogenase family. In terms of assembly, homotetramer. Zn(2+) is required as a cofactor.

Its subcellular location is the cytoplasm. It carries out the reaction a primary alcohol + NAD(+) = an aldehyde + NADH + H(+). The enzyme catalyses a secondary alcohol + NAD(+) = a ketone + NADH + H(+). Converts ethanol to acetaldehyde and plays a major role in xylose fermentation. In Scheffersomyces stipitis (strain ATCC 58785 / CBS 6054 / NBRC 10063 / NRRL Y-11545) (Yeast), this protein is Alcohol dehydrogenase 1 (ADH1).